Here is a 148-residue protein sequence, read N- to C-terminus: MLRLLNKRFYCKFATKTKVRPEKLNFKQLTHPTKVPQTPVKAAFPNTSANEIELDPKSIQLLERLALVDLDSERALETLKSSIQFADKITHIQTDNVRPLYTVLEQQQLQLRNDLVTEGDCRGKVLSNAKVTDEDYFVSPPGNIPLEQ.

The N-terminal 10 residues, 1 to 10 (MLRLLNKRFY), are a transit peptide targeting the mitochondrion.

It belongs to the GatC family. In terms of assembly, subunit of the heterotrimeric GatCAB amidotransferase (AdT) complex, composed of A, B and C subunits.

It is found in the mitochondrion. The enzyme catalyses L-glutamyl-tRNA(Gln) + L-glutamine + ATP + H2O = L-glutaminyl-tRNA(Gln) + L-glutamate + ADP + phosphate + H(+). Allows the formation of correctly charged Gln-tRNA(Gln) through the transamidation of misacylated Glu-tRNA(Gln) in the mitochondria. The reaction takes place in the presence of glutamine and ATP through an activated gamma-phospho-Glu-tRNA(Gln). In Drosophila ananassae (Fruit fly), this protein is Glutamyl-tRNA(Gln) amidotransferase subunit C, mitochondrial.